The primary structure comprises 67 residues: Potassium channel toxin alpha-KTx (67 aa).

Residues Met-1–Ala-25 form the signal peptide. The propeptide occupies Asp-26 to Arg-31. Cystine bridges form between Cys-35–Cys-54, Cys-40–Cys-59, Cys-44–Cys-61, and Cys-49–Cys-64.

The protein belongs to the short scorpion toxin superfamily. Potassium channel inhibitor family. In terms of tissue distribution, expressed by the venom gland.

The protein localises to the secreted. In terms of biological role, blocks Kv1.1/KCNA1, Kv1.2/KCNA2 and Kv1.3/KCNA3 voltage-gated potassium channels. The polypeptide is Potassium channel toxin alpha-KTx (Hoffmannihadrurus gertschi (Scorpion)).